A 743-amino-acid chain; its full sequence is Capsid protein (743 aa).

A disordered region spans residues 665–706 (YVPPEEDFNIQERQQREQRPWTSESESEAEAQEETQAGSVRE).

Belongs to the anelloviridae capsid protein family.

The protein resides in the virion. In terms of biological role, self assemble to form an icosahedral capsid. This Torque teno virus (isolate Human/China/CT39F/2001) (TTV) protein is Capsid protein.